Here is a 246-residue protein sequence, read N- to C-terminus: Serine protease 1 (246 aa).

An N-terminal signal peptide occupies residues 1–15 (MSALLILALVGAAVA). A propeptide spans 16–23 (FPLEDDDK) (activation peptide). The Peptidase S1 domain maps to 24–244 (IVGGYTCPEH…FVGWIQDTIA (221 aa)). Disulfide bonds link cysteine 30–cysteine 160, cysteine 48–cysteine 64, cysteine 132–cysteine 233, cysteine 139–cysteine 206, cysteine 171–cysteine 185, and cysteine 196–cysteine 220. Histidine 63 functions as the Charge relay system in the catalytic mechanism. The Ca(2+) site is built by glutamate 75, asparagine 77, valine 80, and glutamate 85. Catalysis depends on aspartate 107, which acts as the Charge relay system. Serine 200 functions as the Charge relay system in the catalytic mechanism.

It belongs to the peptidase S1 family. Interacts with SERPINA1. Requires Ca(2+) as cofactor.

It is found in the secreted. The protein localises to the extracellular space. It catalyses the reaction Preferential cleavage: Arg-|-Xaa, Lys-|-Xaa.. This is Serine protease 1 from Rattus norvegicus (Rat).